The chain runs to 131 residues: Peptide methionine sulfoxide reductase MsrB (131 aa).

Residues 8–130 enclose the MsrB domain; sequence DAEWRAQLTD…NSVCLDLKRS (123 aa). Zn(2+) contacts are provided by C47, C50, C96, and C99. C119 acts as the Nucleophile in catalysis.

It belongs to the MsrB Met sulfoxide reductase family. Requires Zn(2+) as cofactor.

It carries out the reaction L-methionyl-[protein] + [thioredoxin]-disulfide + H2O = L-methionyl-(R)-S-oxide-[protein] + [thioredoxin]-dithiol. The sequence is that of Peptide methionine sulfoxide reductase MsrB from Alkalilimnicola ehrlichii (strain ATCC BAA-1101 / DSM 17681 / MLHE-1).